Reading from the N-terminus, the 100-residue chain is Large ribosomal subunit protein bL21 (100 aa).

This sequence belongs to the bacterial ribosomal protein bL21 family. As to quaternary structure, part of the 50S ribosomal subunit. Contacts protein L20.

Its function is as follows. This protein binds to 23S rRNA in the presence of protein L20. The sequence is that of Large ribosomal subunit protein bL21 from Ureaplasma parvum serovar 3 (strain ATCC 27815 / 27 / NCTC 11736).